The following is a 93-amino-acid chain: Putative protein adenylyltransferase MJ0435 (93 aa).

The GSX(10)DXD motif motif lies at 26 to 40; the sequence is GSYARNEQKETSDID. Residues aspartate 38, aspartate 40, and aspartate 70 each coordinate Mg(2+).

It belongs to the MntA antitoxin family. As to quaternary structure, probably forms a complex with cognate toxin MJ0434. It depends on Mg(2+) as a cofactor.

It carries out the reaction L-tyrosyl-[protein] + ATP = O-(5'-adenylyl)-L-tyrosyl-[protein] + diphosphate. It catalyses the reaction O-(5'-adenylyl)-L-tyrosyl-[protein] + ATP = O-[5'-(adenylyl-(5'-&gt;3')-adenylyl)]-L-tyrosyl-[protein] + diphosphate. In terms of biological role, probable antitoxin component of a putative type VII toxin-antitoxin (TA) system. Neutralizes cognate toxic MJ0434 by di-AMPylation. The sequence is that of Putative protein adenylyltransferase MJ0435 from Methanocaldococcus jannaschii (strain ATCC 43067 / DSM 2661 / JAL-1 / JCM 10045 / NBRC 100440) (Methanococcus jannaschii).